The chain runs to 554 residues: Macrophage colony-stimulating factor 1 (554 aa).

Residues 1–32 (MTAPGAAGRCPPTTWLGSLLLLVCLLASRSIT) form the signal peptide. Residues 33–496 (EEVSEYCSHM…GSFSPQLQES (464 aa)) lie on the Lumenal side of the membrane. Disulfide bonds link Cys39–Cys122, Cys80–Cys171, and Cys134–Cys178. N-linked (GlcNAc...) asparagine glycosylation is found at Asn154 and Asn172. Residues 224-488 (EDSEGTEGSS…TGHERQSEGS (265 aa)) are disordered. Phosphothreonine; by FAM20C is present on Thr266. Residue Ser309 is glycosylated (O-linked (Xyl...) (chondroitin sulfate) serine). Over residues 344–354 (LSASSPLPASA) the composition is skewed to low complexity. O-linked (GalNAc...) threonine glycosylation is found at Thr363 and Thr365. Residues 404-433 (RISSLRPQGLSNPSTLSAQPQLSRSHSSGS) are compositionally biased toward polar residues. Residues 406-426 (SSLRPQGLSNPSTLSAQPQLS) form an O-glycosylated at one site region. Residues 440–453 (LEGRRSTRDRRSPA) are compositionally biased toward basic and acidic residues. A helical membrane pass occupies residues 497-517 (VFHLLVPSVILVLLAVGGLLF). Over 518 to 554 (YRWRRRSHQEPQRADSPLEQPEGSPLTQDDRQVELPV) the chain is Cytoplasmic. The segment at 526 to 554 (QEPQRADSPLEQPEGSPLTQDDRQVELPV) is disordered. Basic and acidic residues predominate over residues 545 to 554 (QDDRQVELPV).

Homodimer or heterodimer; disulfide-linked. Likely to exist in multiple forms: homodimer consisting of 2 identical 150-200 kDa proteoglycan subunits, heterodimer consisting of a 150-200 kDa proteoglycan subunit and a truncated 43 kDa subunit, and homodimer consisting of 2 identical 43 kDa subunits. Interacts with CSF1R. N-glycosylated. In terms of processing, O-glycosylated; contains chondroitin sulfate. O-glycosylated with core 1 or possibly core 8 glycans. Post-translationally, O-glycosylated.

The protein resides in the cell membrane. Its subcellular location is the secreted. It localises to the extracellular space. Cytokine that plays an essential role in the regulation of survival, proliferation and differentiation of hematopoietic precursor cells, especially mononuclear phagocytes, such as macrophages and monocytes. Promotes the release of pro-inflammatory chemokines, and thereby plays an important role in innate immunity and in inflammatory processes. Plays an important role in the regulation of osteoclast proliferation and differentiation, the regulation of bone resorption, and is required for normal bone development. Required for normal male and female fertility. Promotes reorganization of the actin cytoskeleton, regulates formation of membrane ruffles, cell adhesion and cell migration. Plays a role in lipoprotein clearance. This chain is Macrophage colony-stimulating factor 1 (CSF1), found in Homo sapiens (Human).